Reading from the N-terminus, the 986-residue chain is Translation initiation factor IF-2 (986 aa).

Residues 75–94 are compositionally biased toward basic and acidic residues; sequence KRLSRLEEQSRKTYEKEQHL. 4 disordered regions span residues 75 to 105, 127 to 148, 185 to 258, and 277 to 394; these read KRLS…APPL, PPSK…PDAP, SEVP…VSFD, and GRHK…HEED. Composition is skewed to low complexity over residues 185–210 and 218–235; these read SEVP…ESPL and SEPQ…LPEI. A compositionally biased stretch (basic and acidic residues) spans 292–313; it reads DALKDEFEPKPAEESRVEEKVV. A compositionally biased stretch (low complexity) spans 315–338; the sequence is AKKPPVKAAADVKPKPVVADSSSS. Basic residues predominate over residues 339–348; it reads AKKKGKKKKK. In terms of domain architecture, tr-type G spans 483 to 653; that stretch reads TRPPVVTIMG…LTEAEMRELR (171 aa). The segment at 492 to 499 is G1; sequence GHVDHGKT. 492–499 is a binding site for GTP; it reads GHVDHGKT. The segment at 517 to 521 is G2; it reads GITQH. The interval 539 to 542 is G3; it reads DTPG. Residues 539-543 and 593-596 each bind GTP; these read DTPGH and NKID. The interval 593–596 is G4; it reads NKID. Positions 629-631 are G5; the sequence is SAK.

Belongs to the TRAFAC class translation factor GTPase superfamily. Classic translation factor GTPase family. IF-2 subfamily.

It is found in the cytoplasm. In terms of biological role, one of the essential components for the initiation of protein synthesis. Protects formylmethionyl-tRNA from spontaneous hydrolysis and promotes its binding to the 30S ribosomal subunits. Also involved in the hydrolysis of GTP during the formation of the 70S ribosomal complex. The sequence is that of Translation initiation factor IF-2 from Pelodictyon phaeoclathratiforme (strain DSM 5477 / BU-1).